A 117-amino-acid chain; its full sequence is Large ribosomal subunit protein bL19 (117 aa).

The protein belongs to the bacterial ribosomal protein bL19 family.

This protein is located at the 30S-50S ribosomal subunit interface and may play a role in the structure and function of the aminoacyl-tRNA binding site. This Desulfosudis oleivorans (strain DSM 6200 / JCM 39069 / Hxd3) (Desulfococcus oleovorans) protein is Large ribosomal subunit protein bL19.